Consider the following 231-residue polypeptide: Uridylate cyclase (231 aa).

A Guanylate cyclase domain is found at 46 to 178 (TVLYADLDGS…RAANYAAKLT (133 aa)). A ribonucleoside 5'-triphosphate is bound at residue Tyr49. The Mn(2+) site is built by Asp51 and Asp95. Arg96 lines the a ribonucleoside 5'-triphosphate pocket.

Belongs to the adenylyl cyclase class-4/guanylyl cyclase family. Pyrimidine cyclase subfamily. In terms of assembly, homodimer. It depends on Mn(2+) as a cofactor.

It localises to the cytoplasm. It catalyses the reaction UTP = 3',5'-cyclic UMP + diphosphate. Pycsar (pyrimidine cyclase system for antiphage resistance) provides immunity against bacteriophage. The pyrimidine cyclase (PycC) synthesizes cyclic nucleotides in response to infection; these serve as specific second messenger signals. The signal activates the adjacent effector, leading to bacterial cell death and abortive phage infection. A clade B Pycsar system. Functionally, the pyrimidine cyclase gene of a two-gene Pycsar system, generates cyclic UMP (cUMP) from UTP probably in response to bacteriophage infection. Expression of this and adjacent effector XpPycTIR (AC P0DV29) confers resistance to bacteriophage T7. When cells expressing the Pycsar system are infected phage T7 at low multiplicity of infection (0.2 MOI) the culture survives, at 2.0 MOI bacteria enter growth arrest. The same cells enter growth arrest after exposure to 2.5 mM cUMP but not cCMP; the effector protein responds only to the cUMP produced by its cognate NTP cyclase. This Xanthomonas perforans protein is Uridylate cyclase.